The sequence spans 544 residues: Serine/threonine-protein kinase PAK 3 (544 aa).

Positions 1–73 (MSDSLDNEEK…EKERPEISLP (73 aa)) are disordered. Phosphoserine is present on residues serine 2 and serine 4. Polar residues predominate over residues 18 to 32 (MNSNNRDSSALNHSS). Serine 50 is modified (phosphoserine; by autocatalysis). A compositionally biased stretch (basic and acidic residues) spans 63–73 (KEKERPEISLP). The tract at residues 65-108 (KERPEISLPSDFEHTIHVGFDAVTGEFTGIPEQWARLLQTSNIT) is GTPase-binding. Positions 65 to 135 (KERPEISLPS…YDSKETVNNQ (71 aa)) are autoregulatory region. In terms of domain architecture, CRIB spans 70 to 83 (ISLPSDFEHTIHVG). Residues 84–267 (FDAVTGEFTG…IVSVGDPKKK (184 aa)) form a linker region. Serine 139 carries the phosphoserine; by autocatalysis modification. Disordered stretches follow at residues 156 to 197 (SNTK…RPEH) and 213 to 248 (PAAP…KMTD). At serine 171 the chain carries Phosphoserine. A compositionally biased stretch (acidic residues) spans 171-186 (SEEEDEEEEEEEDDNE). Residues 224–235 (SAENANSSTLYR) show a composition bias toward polar residues. A Protein kinase domain is found at 268–519 (YTRFEKIGQG…AKELLQHPFL (252 aa)). ATP is bound by residues 274–282 (IGQGASGTV) and lysine 297. Aspartate 387 (proton acceptor) is an active-site residue. A Phosphothreonine; by autocatalysis modification is found at threonine 421.

It belongs to the protein kinase superfamily. STE Ser/Thr protein kinase family. STE20 subfamily. In terms of assembly, interacts tightly with GTP-bound but not GDP-bound CDC42/p21 and RAC1. Shows highly specific binding to the SH3 domains of phospholipase C-gamma and of adapter protein NCK. Interacts with the C-terminal of APP. Interacts with ARHGEF6 and ARHGEF7. Interacts with GIT1 and GIT2. Mg(2+) serves as cofactor. Post-translationally, autophosphorylated when activated by CDC42/p21. In terms of processing, neddylated. Detected at high levels in the brain and at low levels in the testis.

It localises to the cytoplasm. The enzyme catalyses L-seryl-[protein] + ATP = O-phospho-L-seryl-[protein] + ADP + H(+). It catalyses the reaction L-threonyl-[protein] + ATP = O-phospho-L-threonyl-[protein] + ADP + H(+). Its activity is regulated as follows. Activated by binding small G proteins. Binding of GTP-bound CDC42 or RAC1 to the autoregulatory region releases monomers from the autoinhibited dimer, enables phosphorylation of Thr-421 and allows the kinase domain to adopt an active structure. Functionally, serine/threonine protein kinase that plays a role in a variety of different signaling pathways including cytoskeleton regulation, cell migration, or cell cycle regulation. Plays a role in dendrite spine morphogenesis as well as synapse formation and plasticity. Acts as a downstream effector of the small GTPases CDC42 and RAC1. Activation by the binding of active CDC42 and RAC1 results in a conformational change and a subsequent autophosphorylation on several serine and/or threonine residues. Phosphorylates MAPK4 and MAPK6 and activates the downstream target MAPKAPK5, a regulator of F-actin polymerization and cell migration. Additionally, phosphorylates TNNI3/troponin I to modulate calcium sensitivity and relaxation kinetics of thin myofilaments. May also be involved in early neuronal development. In hippocampal neurons, necessary for the formation of dendritic spines and excitatory synapses; this function is dependent on kinase activity and may be exerted by the regulation of actomyosin contractility through the phosphorylation of myosin II regulatory light chain (MLC). The sequence is that of Serine/threonine-protein kinase PAK 3 (Pak3) from Rattus norvegicus (Rat).